The sequence spans 124 residues: Cytochrome c2 (124 aa).

At Gln1 the chain carries Pyrrolidone carboxylic acid. Residues Cys15, Cys18, His19, and Met100 each coordinate heme c.

Binds 1 heme c group covalently per subunit.

It is found in the periplasm. Its function is as follows. Cytochrome c2 is found mainly in purple, non-sulfur, photosynthetic bacteria where it functions as the electron donor to the oxidized bacteriochlorophyll in the photophosphorylation pathway. However, it may also have a role in the respiratory chain and is found in some non-photosynthetic bacteria. The chain is Cytochrome c2 (cycA) from Cereibacter sphaeroides (Rhodobacter sphaeroides).